We begin with the raw amino-acid sequence, 303 residues long: Exosome complex component RRP4 homolog (303 aa).

Residues 175-213 (GILIKVPPHLIKKSKKHFHTLPYGMAVIIGCNGSVWVTP) form the KH domain.

It belongs to the RRP4 family. In terms of assembly, component of the RNA exosome complex. In terms of tissue distribution, ubiquitously expressed.

The protein localises to the nucleus. It localises to the nucleolus. Its subcellular location is the nucleoplasm. Functionally, non-catalytic component of the RNA exosome complex which has 3'-&gt;5' exoribonuclease activity and participates in a multitude of cellular RNA processing and degradation events. Involved in regulation of antisense ribosomal siRNA production. Involved in response to cold-warm shock. The sequence is that of Exosome complex component RRP4 homolog from Caenorhabditis elegans.